The following is a 133-amino-acid chain: Small ribosomal subunit protein uS8c (133 aa).

Belongs to the universal ribosomal protein uS8 family. Part of the 30S ribosomal subunit.

The protein resides in the plastid. It localises to the chloroplast. One of the primary rRNA binding proteins, it binds directly to 16S rRNA central domain where it helps coordinate assembly of the platform of the 30S subunit. The polypeptide is Small ribosomal subunit protein uS8c (rps8) (Chlorokybus atmophyticus (Soil alga)).